We begin with the raw amino-acid sequence, 77 residues long: Small ribosomal subunit protein uS17 (77 aa).

Belongs to the universal ribosomal protein uS17 family. As to quaternary structure, part of the 30S ribosomal subunit.

Functionally, one of the primary rRNA binding proteins, it binds specifically to the 5'-end of 16S ribosomal RNA. The sequence is that of Small ribosomal subunit protein uS17 from Rickettsia conorii (strain ATCC VR-613 / Malish 7).